Reading from the N-terminus, the 513-residue chain is Calcium-dependent protein kinase 2 (513 aa).

The 259-residue stretch at 65–323 folds into the Protein kinase domain; that stretch reads YSFGKELGRG…SAQVLQHQWL (259 aa). ATP is bound by residues 71-79 and K94; that span reads LGRGQFGVT. The active-site Proton acceptor is D189. Positions 329–359 are autoinhibitory domain; it reads ASDKPIDSAVLSRMKQFRAMNKLKKMALKVI. 4 EF-hand domains span residues 366 to 401, 402 to 437, 438 to 473, and 478 to 508; these read EEIK…LGSK, LSEA…RHKL, ERDE…HEMG, and IREI…GMQQ. The Ca(2+) site is built by D379, D381, S383, T385, E390, D415, D417, N419, S421, E426, D451, D453, S455, E462, D486, D488, D490, R492, and E497.

Belongs to the protein kinase superfamily. Ser/Thr protein kinase family. CDPK subfamily.

The catalysed reaction is L-seryl-[protein] + ATP = O-phospho-L-seryl-[protein] + ADP + H(+). It carries out the reaction L-threonyl-[protein] + ATP = O-phospho-L-threonyl-[protein] + ADP + H(+). Its activity is regulated as follows. Activated by calcium. Autophosphorylation may play an important role in the regulation of the kinase activity. May play a role in signal transduction pathways that involve calcium as a second messenger. The sequence is that of Calcium-dependent protein kinase 2 (CPK2) from Zea mays (Maize).